The sequence spans 103 residues: Histone H4, major (103 aa).

The span at 1–12 (MAGGKGGKGMGK) shows a compositional bias: gly residues. Residues 1–29 (MAGGKGGKGMGKVGAKRHSKRSNKASIEG) form a disordered region. N6-acetyllysine occurs at positions 5, 8, 12, and 16. Residues 14–23 (GAKRHSKRSN) are compositionally biased toward basic residues. The DNA-binding element occupies 16 to 21 (KRHSKR).

This sequence belongs to the histone H4 family. In terms of assembly, the nucleosome is a histone octamer containing two molecules each of H2A, H2B, H3 and H4 assembled in one H3-H4 heterotetramer and two H2A-H2B heterodimers. The octamer wraps approximately 147 bp of DNA.

It localises to the nucleus. Its subcellular location is the chromosome. In terms of biological role, core component of nucleosome. Nucleosomes wrap and compact DNA into chromatin, limiting DNA accessibility to the cellular machineries which require DNA as a template. Histones thereby play a central role in transcription regulation, DNA repair, DNA replication and chromosomal stability. DNA accessibility is regulated via a complex set of post-translational modifications of histones, also called histone code, and nucleosome remodeling. This is Histone H4, major from Tetrahymena pyriformis.